A 944-amino-acid polypeptide reads, in one-letter code: snRNA-activating protein complex subunit 4 homolog (944 aa).

A disordered region spans residues 1-22 (MSDLVMFEPGASTSTDVPTNTD). Polar residues predominate over residues 11–22 (ASTSTDVPTNTD). The 68-residue stretch at 177–244 (TSNFDRRQWT…AVKSKWYNEL (68 aa)) folds into the Myb-like 1 domain. Positions 245–301 (NPKWNKEHWSNEEVEKLKYLRESPKFVSWPMLALNLGTNRTSYQCMEKYKTEVSQHS) constitute an HTH myb-type 1 domain. The segment at residues 273–297 (WPMLALNLGTNRTSYQCMEKYKTEV) is a DNA-binding region (H-T-H motif). A Myb-like 2 domain is found at 304–350 (WSQDEDTKLIALTKITSINGHIQWDKVAQCMPGRTRQQVRTRFSHTL). HTH myb-type domains lie at 351 to 406 (DASV…NRSA) and 407 to 459 (HVNE…AAKL). 2 consecutive DNA-binding regions (H-T-H motif) follow at residues 379–402 (WAKV…TNVL) and 432–455 (WAKC…LQLI). Low complexity predominate over residues 911 to 921 (ARPARPPRSSA). A disordered region spans residues 911-935 (ARPARPPRSSAGTPTPSHVSIDTES). Residues 922–935 (GTPTPSHVSIDTES) show a composition bias toward polar residues.

Broadly expressed in all tissues, including head, vulva and tail.

The protein localises to the nucleus. Functionally, binds to the promoter regions of RNA polymerase II and III small-nuclear RNA genes, type 3 RNA polymerase III non-coding RNA genes, small nucleolar RNAs and transfer RNA genes. Required for expression of mature 21U-RNAs. This is snRNA-activating protein complex subunit 4 homolog from Caenorhabditis elegans.